A 58-amino-acid chain; its full sequence is UPF0391 membrane protein Gbem_0127 (58 aa).

Helical transmembrane passes span 4–24 (WALI…GGIA) and 33–53 (ILFY…LLAG).

It belongs to the UPF0391 family.

The protein resides in the cell membrane. In Citrifermentans bemidjiense (strain ATCC BAA-1014 / DSM 16622 / JCM 12645 / Bem) (Geobacter bemidjiensis), this protein is UPF0391 membrane protein Gbem_0127.